A 183-amino-acid chain; its full sequence is Auxin-responsive protein IAA20 (183 aa).

Disordered stretches follow at residues 1-23 (MELELGLRLALPSPSPSPATATA) and 42-77 (GFEEALGGFKTDDDNDDGNGRGGDGDSDGEMGNKRR). Residues 3-7 (LELGL) carry the EAR-like (transcriptional repression) motif. In terms of domain architecture, PB1 spans 98–183 (GGYVKVKMEG…KSVKRLKILV (86 aa)).

Belongs to the Aux/IAA family. In terms of assembly, homodimers and heterodimers. In terms of tissue distribution, expressed at very low levels in etiolated seedlings and flowers.

Its subcellular location is the nucleus. Functionally, aux/IAA proteins are short-lived transcriptional factors that function as repressors of early auxin response genes at low auxin concentrations. This Oryza sativa subsp. japonica (Rice) protein is Auxin-responsive protein IAA20 (IAA20).